The following is a 397-amino-acid chain: Probable sugar efflux transporter (397 aa).

12 consecutive transmembrane segments (helical) span residues 15–35 (VVTL…PVGL), 50–70 (VGIM…PFML), 81–101 (LICL…AWNF), 103–123 (VLVI…SITA), 136–156 (AQAL…GLPI), 169–189 (TFFA…KLLP), 209–229 (PALM…YTAY), 246–266 (FATV…VVFG), 275–295 (PLIS…LPAA), 301–321 (LAVL…GMQV), 333–353 (VAMA…ALVG), and 364–384 (TIGY…IIIF).

The protein belongs to the major facilitator superfamily. SotB (TC 2.A.1.2) family.

It localises to the cell inner membrane. Involved in the efflux of sugars. The physiological role may be the reduction of the intracellular concentration of toxic sugars or sugar metabolites. This chain is Probable sugar efflux transporter, found in Citrobacter koseri (strain ATCC BAA-895 / CDC 4225-83 / SGSC4696).